A 437-amino-acid polypeptide reads, in one-letter code: Enolase 1 (437 aa).

Gln-164 contacts (2R)-2-phosphoglycerate. The active-site Proton donor is the Glu-206. Mg(2+) is bound by residues Asp-244, Glu-289, and Asp-316. Positions 341, 370, 371, and 392 each coordinate (2R)-2-phosphoglycerate. Lys-341 functions as the Proton acceptor in the catalytic mechanism.

The protein belongs to the enolase family. It depends on Mg(2+) as a cofactor.

The protein localises to the cytoplasm. It is found in the secreted. Its subcellular location is the cell surface. The enzyme catalyses (2R)-2-phosphoglycerate = phosphoenolpyruvate + H2O. It participates in carbohydrate degradation; glycolysis; pyruvate from D-glyceraldehyde 3-phosphate: step 4/5. Its function is as follows. Catalyzes the reversible conversion of 2-phosphoglycerate (2-PG) into phosphoenolpyruvate (PEP). It is essential for the degradation of carbohydrates via glycolysis. In Desulfitobacterium hafniense (strain Y51), this protein is Enolase 1.